The sequence spans 281 residues: Foldase protein PrsA (281 aa).

An N-terminal signal peptide occupies residues 1–18 (MKKWMMAAAVVSLMALSA). Cysteine 19 is lipidated: N-palmitoyl cysteine. Cysteine 19 carries S-diacylglycerol cysteine lipidation. The 91-residue stretch at 133-223 (KPKIRASHIL…YGYHIIKVTD (91 aa)) folds into the PpiC domain.

The protein belongs to the PrsA family.

Its subcellular location is the cell membrane. It catalyses the reaction [protein]-peptidylproline (omega=180) = [protein]-peptidylproline (omega=0). Its function is as follows. Plays a major role in protein secretion by helping the post-translocational extracellular folding of several secreted proteins. In Geobacillus kaustophilus (strain HTA426), this protein is Foldase protein PrsA.